Consider the following 78-residue polypeptide: Putative membrane protein insertion efficiency factor (78 aa).

Belongs to the UPF0161 family.

It is found in the cell inner membrane. Could be involved in insertion of integral membrane proteins into the membrane. This Prochlorococcus marinus subsp. pastoris (strain CCMP1986 / NIES-2087 / MED4) protein is Putative membrane protein insertion efficiency factor.